A 292-amino-acid chain; its full sequence is Acetyl-coenzyme A carboxylase carboxyl transferase subunit beta (292 aa).

The 264-residue stretch at 29-292 folds into the CoA carboxyltransferase N-terminal domain; the sequence is LWSKCPECGQ…HGCLQGSAAV (264 aa). Zn(2+)-binding residues include C33, C36, C52, and C55. The C4-type zinc-finger motif lies at 33–55; sequence CPECGQVVYRKDLLANASVCSNC.

Belongs to the AccD/PCCB family. In terms of assembly, acetyl-CoA carboxylase is a heterohexamer composed of biotin carboxyl carrier protein (AccB), biotin carboxylase (AccC) and two subunits each of ACCase subunit alpha (AccA) and ACCase subunit beta (AccD). The cofactor is Zn(2+).

The protein localises to the cytoplasm. The enzyme catalyses N(6)-carboxybiotinyl-L-lysyl-[protein] + acetyl-CoA = N(6)-biotinyl-L-lysyl-[protein] + malonyl-CoA. It functions in the pathway lipid metabolism; malonyl-CoA biosynthesis; malonyl-CoA from acetyl-CoA: step 1/1. Component of the acetyl coenzyme A carboxylase (ACC) complex. Biotin carboxylase (BC) catalyzes the carboxylation of biotin on its carrier protein (BCCP) and then the CO(2) group is transferred by the transcarboxylase to acetyl-CoA to form malonyl-CoA. This chain is Acetyl-coenzyme A carboxylase carboxyl transferase subunit beta, found in Synechococcus sp. (strain WH7803).